Here is a 143-residue protein sequence, read N- to C-terminus: Large ribosomal subunit protein eL28z (143 aa).

Belongs to the eukaryotic ribosomal protein eL28 family. In terms of assembly, component of the large ribosomal subunit. As to expression, expressed in seedlings, roots, stems, leaves, inflorescences and siliques.

It localises to the cytoplasm. The protein resides in the nucleus. It is found in the nucleolus. The protein localises to the nucleoplasm. Functionally, component of the large ribosomal subunit. Essential in leaf polarity establishment, probably having a role for translation in leaf dorsoventral patterning to specify leaf adaxial identity. The protein is Large ribosomal subunit protein eL28z of Arabidopsis thaliana (Mouse-ear cress).